Reading from the N-terminus, the 133-residue chain is Adenosine 5'-monophosphoramidase hnt1 (133 aa).

The 104-residue stretch at 4 to 107 folds into the HIT domain; the sequence is IFCKIVKGDI…IPKPNEEYGL (104 aa). AMP is bound by residues 29–30, Asn-81, 87–89, and 94–96; these read DI, HQF, and HFH. The short motif at 92 to 96 is the Histidine triad motif element; it reads HVHFH. The active-site Tele-AMP-histidine intermediate is the His-94.

This sequence belongs to the HINT family. In terms of assembly, homodimer. Requires Mg(2+) as cofactor.

It is found in the nucleus. The enzyme catalyses adenosine 5'-phosphoramidate + H2O = AMP + NH4(+). Its function is as follows. Hydrolyzes adenosine 5'-monophosphoramidate substrates such as AMP-morpholidate, AMP-N-alanine methyl ester, AMP-alpha-acetyl lysine methyl ester and AMP-NH2. This Schizosaccharomyces pombe (strain 972 / ATCC 24843) (Fission yeast) protein is Adenosine 5'-monophosphoramidase hnt1 (hnt1).